We begin with the raw amino-acid sequence, 343 residues long: Delta(1)-pyrroline-2-carboxylate/Delta(1)-piperideine-2-carboxylate reductase (343 aa).

S53 serves as the catalytic Charge relay system. The Proton donor role is filled by H54. Position 58 (R58) interacts with substrate. Position 126–130 (126–130 (HFAAL)) interacts with NADP(+). T166 provides a ligand contact to substrate. Residue 184 to 186 (DLA) coordinates NADP(+). 192 to 193 (HG) provides a ligand contact to substrate. The active-site Charge relay system is D194. NADP(+) contacts are provided by residues 236–237 (HK) and 309–315 (RLPGDRR).

The protein belongs to the LDH2/MDH2 oxidoreductase family. As to quaternary structure, homodimer.

It catalyses the reaction L-pipecolate + NADP(+) = Delta(1)-piperideine-2-carboxylate + NADPH + H(+). It carries out the reaction L-proline + NADP(+) = 1-pyrroline-2-carboxylate + NADPH + H(+). The enzyme catalyses N-methyl-L-alanine + NADP(+) + H2O = methylamine + pyruvate + NADPH + H(+). Its activity is regulated as follows. Is inhibited by the substrate analog pyrrole-2-carboxylate, and by 2-picolinate. Catalyzes the reduction of both Delta(1)-pyrroline-2-carboxylate (Pyr2C) and Delta(1)-piperideine-2-carboxylate (Pip2C) to L-proline and L-pipecolate, respectively, using NADPH as the electron donor. Can catalyze the reverse oxidation reactions, albeit at a much lower rate. Is also able to catalyze in vitro the NADPH-dependent formation of N-methylalanine from pyruvate and N-methylamine; can act on other alpha-keto acids and specifically uses methylamine and not ammonia for these reductive amination reactions. Can use NADH instead of NADPH, although with much less efficiency. The polypeptide is Delta(1)-pyrroline-2-carboxylate/Delta(1)-piperideine-2-carboxylate reductase (Pseudomonas syringae pv. tomato).